The primary structure comprises 67 residues: Large ribosomal subunit protein bL32 (67 aa).

Residues 1–19 are compositionally biased toward basic residues; that stretch reads MAVPKRKMSRANTRARRSQ. Positions 1–21 are disordered; sequence MAVPKRKMSRANTRARRSQWK.

It belongs to the bacterial ribosomal protein bL32 family.

This chain is Large ribosomal subunit protein bL32, found in Micrococcus luteus (strain ATCC 4698 / DSM 20030 / JCM 1464 / CCM 169 / CCUG 5858 / IAM 1056 / NBRC 3333 / NCIMB 9278 / NCTC 2665 / VKM Ac-2230) (Micrococcus lysodeikticus).